The chain runs to 75 residues: Small ribosomal subunit protein bS18 (75 aa).

Belongs to the bacterial ribosomal protein bS18 family. As to quaternary structure, part of the 30S ribosomal subunit. Forms a tight heterodimer with protein bS6.

Its function is as follows. Binds as a heterodimer with protein bS6 to the central domain of the 16S rRNA, where it helps stabilize the platform of the 30S subunit. The chain is Small ribosomal subunit protein bS18 (rbsR) from Rhodobacter capsulatus (strain ATCC BAA-309 / NBRC 16581 / SB1003).